The following is a 1050-amino-acid chain: Toluene efflux pump membrane transporter TtgB (1050 aa).

A run of 12 helical transmembrane segments spans residues 10-30 (IFAW…ILKL), 339-359 (GVIH…YLFL), 370-390 (MTVP…GFSI), 393-413 (LTMF…IVVV), 440-460 (GALV…AFFG), 472-492 (ITIV…TPAL), 539-559 (VPFL…FARI), 871-891 (MPAL…ALYE), 893-913 (WSIP…ALIA), 923-943 (VYFL…AILI), 972-992 (IIMT…ASGA), and 1004-1024 (VIGG…LFFV).

It belongs to the resistance-nodulation-cell division (RND) (TC 2.A.6) family.

Its subcellular location is the cell inner membrane. In terms of biological role, the inner membrane transporter component of a constitutive organic solvent efflux system. Involved in export of toluene, styrene, m-xylene, propylbenzene and ethylbenzene. Also exports AMP and the antibiotics carbenicillin, nalidixic acid, chloramphenicol and tetracycline. The sequence is that of Toluene efflux pump membrane transporter TtgB (ttgB) from Pseudomonas putida (strain DOT-T1E).